An 862-amino-acid polypeptide reads, in one-letter code: MLLEKIVEAISGRSEDNGKKVKGTIVLMKKNVLDFNDVNASLLDGVLEFLGKRVSLQLISVVHADPGNSLQGKRSNPAYLEKWLTTGTSLVAGESAFDVTFDWDEDIGVPGAFIINNFHFNEFYLKSLTLEDVPNHGNVHFVCNSWVYPAKKYKSERIFFANQAYLPGETPEPLRNYREKELVNLRGNGNGKLEEWDRVYDYALYNDLGDPEKGKQYARTILGGSAEYPYPRRGRTGRKPTKADPKSESRIPLLMSLDIYVPRDERFGHIKLSDFLTYALKSIVQFLIPEFQALFDSTPDEFDSFEDVLKLYEGGIKLPQGPFLKALTDSIPLEILKEIIRTDGEGKFKFPTPQVIQEDKSSWRTDEEFAREMLAGVNPVIISRLQEFPPKSQLDSEVYGNQNSTITKEHIENTLDGLTIDDAIKTNRLYILNHHDILMPYVRRINTTNTKLYASRTLLFLQDDGTMKPVAIELSLPHPDGDELGAVSKVYTPADQGVEGSIWQLAKAYVAVNDSGVHQLISHWLNTHAAIEPFVIATNRQLSVLHPIHKLLHPHFRDTMNINALARQILINAGGVLEMTVFPAKYAMEMSAVVYKSWVFPEQALPADLIKRGVAVEDSSSPHGVRLLIQDYPYAVDGLEIWSAIKSWVTEYCNFYYKSDELVLKDNELQAWWKELREEGHGDKKDEPWWPKMQTRQELKDSCTIIIWIASALHAAVNFGQYPYAGYLPNRPTLSRRFMPEPGTPEYEELKTNPDKAYLKTITPQLQTLLGISLIEILSRHASDEIYLGQRDSSEWTKDQEPIAAFERFGKKLSEIEDQIIQMNGDKKWKNRSGPVNVPYTLLFPTSEQGLTGKGIPNSVSI.

Positions 36-161 (NDVNASLLDG…KYKSERIFFA (126 aa)) constitute a PLAT domain. The region spanning 164 to 862 (AYLPGETPEP…GKGIPNSVSI (699 aa)) is the Lipoxygenase domain. Fe cation is bound by residues H523, H528, H714, N718, and I862.

This sequence belongs to the lipoxygenase family. As to quaternary structure, monomer. It depends on Fe cation as a cofactor. As to expression, not detected in leaves, stems, flowers, roots, tubers and stolons during normal growth and development.

It localises to the cytoplasm. The catalysed reaction is (9Z,12Z)-octadecadienoate + O2 = (9S)-hydroperoxy-(10E,12Z)-octadecadienoate. It functions in the pathway lipid metabolism; oxylipin biosynthesis. In terms of biological role, plant lipoxygenases may be involved in a number of diverse aspects of plant physiology including growth and development, pest resistance, and senescence or responses to wounding. May contribute to cell death during the hypersensitive response (HR) by the massive production of free fatty acid hydroperoxides. Catalyzes the hydroperoxidation of lipids containing a cis,cis-1,4-pentadiene structure. The protein is Probable linoleate 9S-lipoxygenase 5 (LOX1.5) of Solanum tuberosum (Potato).